The chain runs to 404 residues: Argininosuccinate synthase (404 aa).

ATP-binding positions include alanine 10–serine 18 and alanine 37. L-citrulline is bound by residues tyrosine 88 and serine 93. Glycine 118 contacts ATP. Threonine 120, asparagine 124, and aspartate 125 together coordinate L-aspartate. L-citrulline is bound at residue asparagine 124. L-citrulline-binding residues include arginine 128, serine 179, serine 188, glutamate 264, and tyrosine 276.

This sequence belongs to the argininosuccinate synthase family. Type 1 subfamily. Homotetramer.

It localises to the cytoplasm. It catalyses the reaction L-citrulline + L-aspartate + ATP = 2-(N(omega)-L-arginino)succinate + AMP + diphosphate + H(+). It participates in amino-acid biosynthesis; L-arginine biosynthesis; L-arginine from L-ornithine and carbamoyl phosphate: step 2/3. The sequence is that of Argininosuccinate synthase from Nitrosomonas eutropha (strain DSM 101675 / C91 / Nm57).